The sequence spans 602 residues: Sodium-independent sulfate anion transporter (602 aa).

The Extracellular segment spans residues 1 to 47; the sequence is MSPPMSPMKPPKGFAPMSCCWSTETMQKWLPFLGWLPDYTWYALKMD. A helical membrane pass occupies residues 48-68; the sequence is FIAGISVGLTVIPQALAYAEV. Ala69 is a topological domain (cytoplasmic). Residues 70–90 traverse the membrane as a helical segment; that stretch reads GLPPQYGLYSAFMGCFVYFFL. Over 91-115 the chain is Extracellular; that stretch reads GTSRDVTLGPTAIMSLLVSFYTFHE. The chain crosses the membrane as a helical span at residues 116-136; the sequence is PAYAVLLAFLTGCIQLGMGFL. Over 137–143 the chain is Cytoplasmic; sequence RLGLLLD. A helical transmembrane segment spans residues 144–164; that stretch reads FISCPVIKGFTSAAAIIIGFG. Residues 165-193 lie on the Extracellular side of the membrane; that stretch reads QIKNLLGLQHIPRQFFLQVYYTFHNIGET. A helical transmembrane segment spans residues 194 to 214; that stretch reads RVGDAVLGLVCMVLLLVLKLM. Over 215–246 the chain is Cytoplasmic; that stretch reads RDHVPPVHPEMPTGVRLSHGLVWTATTARNAL. A helical membrane pass occupies residues 247 to 267; the sequence is VVSFAALVAYSFQVTGYQPFV. Over 268-300 the chain is Extracellular; the sequence is LTGKTPEGLPDAHIPPFSVTTANGTISFTEMVQ. A helical membrane pass occupies residues 301–321; the sequence is GMGAGLVVVPLMGLLESIAVA. The Cytoplasmic portion of the chain corresponds to 322–337; it reads KSFASQNNYRINSNQE. The chain crosses the membrane as a helical span at residues 338–358; sequence LLALGFTNILGSLFSSYPVTG. At 359 to 370 the chain is on the extracellular side; that stretch reads SFGRTAVNAQSG. A helical membrane pass occupies residues 371-391; it reads VCTPAGGLMTGALVLLSLDYL. Over 392 to 394 the chain is Cytoplasmic; the sequence is TSL. A helical transmembrane segment spans residues 395 to 415; it reads FYYIPKSALAAVIIMAVVPLF. At 416–438 the chain is on the extracellular side; the sequence is DTKIVKTLWRVKRLDLLPLCVTF. Residues 439-459 traverse the membrane as a helical segment; sequence LLCFWEVQYGILAGTLVSVLI. At 460-602 the chain is on the cytoplasmic side; sequence LLHSVARPKI…PEHKIALLKA (143 aa). Residues 466–580 form the STAS domain; it reads RPKIQVSEGP…EAEKYLKQEP (115 aa).

The protein belongs to the SLC26A/SulP transporter (TC 2.A.53) family.

The protein resides in the cell membrane. It is found in the lysosome membrane. It localises to the apical cell membrane. Its subcellular location is the basolateral cell membrane. It carries out the reaction hydrogencarbonate(in) + chloride(out) = hydrogencarbonate(out) + chloride(in). It catalyses the reaction sulfate(in) + H(+)(in) = sulfate(out) + H(+)(out). The catalysed reaction is oxalate(in) + chloride(out) = oxalate(out) + chloride(in). Its function is as follows. Sodium-independent anion exchanger mediating bicarbonate, chloride, sulfate and oxalate transport. Exhibits sodium-independent sulfate anion transporter activity that may cooperate with SLC26A2 to mediate DIDS-sensitive sulfate uptake into high endothelial venules endothelial cells (HEVEC). In the kidney, mediates chloride-bicarbonate exchange, facilitating V-ATPase-mediated acid secretion. May function as a chloride channel, playing an important role in moderating chloride homeostasis and neuronal activity in the cerebellum. The protein is Sodium-independent sulfate anion transporter of Bos taurus (Bovine).